The primary structure comprises 382 residues: Lipid-A-disaccharide synthase (382 aa).

It belongs to the LpxB family.

It carries out the reaction 2-N,3-O-bis[(3R)-3-hydroxytetradecanoyl]-alpha-D-glucosaminyl 1-phosphate + UDP-2-N,3-O-bis[(3R)-3-hydroxytetradecanoyl]-alpha-D-glucosamine = lipid A disaccharide (E. coli) + UDP + H(+). The enzyme catalyses a lipid X + a UDP-2-N,3-O-bis[(3R)-3-hydroxyacyl]-alpha-D-glucosamine = a lipid A disaccharide + UDP + H(+). Its pathway is glycolipid biosynthesis; lipid IV(A) biosynthesis; lipid IV(A) from (3R)-3-hydroxytetradecanoyl-[acyl-carrier-protein] and UDP-N-acetyl-alpha-D-glucosamine: step 5/6. In terms of biological role, condensation of UDP-2,3-diacylglucosamine and 2,3-diacylglucosamine-1-phosphate to form lipid A disaccharide, a precursor of lipid A, a phosphorylated glycolipid that anchors the lipopolysaccharide to the outer membrane of the cell. In Shigella flexneri, this protein is Lipid-A-disaccharide synthase.